A 213-amino-acid chain; its full sequence is Large ribosomal subunit protein uL3 (213 aa).

Positions lysine 130–arginine 161 are disordered.

It belongs to the universal ribosomal protein uL3 family. As to quaternary structure, part of the 50S ribosomal subunit. Forms a cluster with proteins L14 and L19.

One of the primary rRNA binding proteins, it binds directly near the 3'-end of the 23S rRNA, where it nucleates assembly of the 50S subunit. The protein is Large ribosomal subunit protein uL3 of Picosynechococcus sp. (strain ATCC 27264 / PCC 7002 / PR-6) (Agmenellum quadruplicatum).